The chain runs to 102 residues: Aspartyl/glutamyl-tRNA(Asn/Gln) amidotransferase subunit C (102 aa).

This sequence belongs to the GatC family. As to quaternary structure, heterotrimer of A, B and C subunits.

The enzyme catalyses L-glutamyl-tRNA(Gln) + L-glutamine + ATP + H2O = L-glutaminyl-tRNA(Gln) + L-glutamate + ADP + phosphate + H(+). It catalyses the reaction L-aspartyl-tRNA(Asn) + L-glutamine + ATP + H2O = L-asparaginyl-tRNA(Asn) + L-glutamate + ADP + phosphate + 2 H(+). Allows the formation of correctly charged Asn-tRNA(Asn) or Gln-tRNA(Gln) through the transamidation of misacylated Asp-tRNA(Asn) or Glu-tRNA(Gln) in organisms which lack either or both of asparaginyl-tRNA or glutaminyl-tRNA synthetases. The reaction takes place in the presence of glutamine and ATP through an activated phospho-Asp-tRNA(Asn) or phospho-Glu-tRNA(Gln). This chain is Aspartyl/glutamyl-tRNA(Asn/Gln) amidotransferase subunit C, found in Leuconostoc citreum (strain KM20).